Here is a 318-residue protein sequence, read N- to C-terminus: Rhomboid-related protein 4 (318 aa).

The Cytoplasmic portion of the chain corresponds to 1 to 21 (MQRRSRGINTGLILLLSQIFH). Residues 22-42 (VGINNIPPVTLATLALNIWFF) form a helical membrane-spanning segment. Over 43-106 (LNPQKPLYSS…RRLGSRWFAY (64 aa)) the chain is Extracellular. The chain crosses the membrane as a helical span at residues 107 to 127 (VITTFSVLTGVVYLLLQFAVA). The Cytoplasmic portion of the chain corresponds to 128–137 (EFMDEPDFKR). A helical membrane pass occupies residues 138–154 (SCAVGFSGVLFALKVLN). The active-site Nucleophile is the serine 144. Topologically, residues 155-179 (NHYCPGGFVNILGFPVPNRFACWVE) are extracellular. A helical membrane pass occupies residues 180 to 204 (LVAIHLFSPGTSFAGHQAGILVGLM). The active site involves histidine 195. The Cytoplasmic segment spans residues 205–318 (YTQGPLKKIM…RQRLHRFDSQ (114 aa)). The interval 271 to 286 (SEEEQLERALQASLWD) is ubiquitin-binding domain (UBD). The interval 285–318 (WDRGHTRNSPPPYGFHLSPEEEMRRQRLHRFDSQ) is disordered. Positions 302-318 (SPEEEMRRQRLHRFDSQ) are enriched in basic and acidic residues. Residues 303-318 (PEEEMRRQRLHRFDSQ) are VCP/p97-interacting motif (VIM).

It belongs to the peptidase S54 family. Interacts with BIK and STEAP3. Interacts (via C-terminal domain) with VCP. Interacts with ubiquitin and ubiquitinated proteins.

It is found in the endoplasmic reticulum membrane. The protein localises to the mitochondrion membrane. It catalyses the reaction Cleaves type-1 transmembrane domains using a catalytic dyad composed of serine and histidine that are contributed by different transmembrane domains.. Its activity is regulated as follows. Inhibited by aprotinin. Intramembrane-cleaving serine protease that cleaves single transmembrane or multi-pass membrane proteins in the hydrophobic plane of the membrane, luminal loops and juxtamembrane regions. Involved in regulated intramembrane proteolysis and the subsequent release of functional polypeptides from their membrane anchors. Functional component of endoplasmic reticulum-associated degradation (ERAD) for misfolded membrane proteins. Required for the degradation process of some specific misfolded endoplasmic reticulum (ER) luminal proteins. Participates in the transfer of misfolded proteins from the ER to the cytosol, where they are destroyed by the proteasome in a ubiquitin-dependent manner. Functions in BIK, MPZ, PKD1, PTCRA, RHO, STEAP3 and TRAC processing. Involved in the regulation of exosomal secretion; inhibits the TSAP6-mediated secretion pathway. Involved in the regulation of apoptosis; modulates BIK-mediated apoptotic activity. Also plays a role in the regulation of spermatogenesis; inhibits apoptotic activity in spermatogonia. In Pongo abelii (Sumatran orangutan), this protein is Rhomboid-related protein 4 (RHBDD1).